A 139-amino-acid polypeptide reads, in one-letter code: Fluoroacetyl-CoA thioesterase (139 aa).

Substrate is bound by residues 40 to 50 and glycine 69; that span reads FATGFMVGLME. Catalysis depends on residues threonine 42 and glutamate 50. Residues glycine 69 and 76-77 each bind CoA; that span reads HT. Histidine 76 is a catalytic residue. Arginine 120 is a substrate binding site.

Homodimer.

The catalysed reaction is fluoroacetyl-CoA + H2O = fluoroacetate + CoA + H(+). Functionally, hydrolyzes fluoroacetyl-CoA before it can react with citrate synthase, and thus confers fluoroacetate resistance. Cannot use acetyl-CoA as substrate. The chain is Fluoroacetyl-CoA thioesterase (flK) from Streptantibioticus cattleyicolor (Streptomyces cattleya).